The sequence spans 363 residues: NAD-dependent epimerase/dehydratase tndE (363 aa).

The chain crosses the membrane as a helical span at residues 10-30; that stretch reads GLVLITGVNGFLASHLALQLI. Residue Y176 coordinates NADP(+).

The protein belongs to the NAD(P)-dependent epimerase/dehydratase family. Dihydroflavonol-4-reductase subfamily.

It localises to the membrane. The protein operates within secondary metabolite biosynthesis; terpenoid biosynthesis. Its function is as follows. NAD-dependent epimerase/dehydratase; part of the gene cluster that mediates the biosynthesis of talaronoid C, a fusicoccane diterpenoid with an unprecedented tricyclic 5/8/6 ring system. The first step in the pathway is performed by the fusicoccadiene synthase tndC that possesses both prenyl transferase and terpene cyclase activity, converting isopentenyl diphosphate and dimethylallyl diphosphate into geranylgeranyl diphosphate (GGDP) and further converting GGDP into talarodiene, a precursor for talaronoid C. The remaining enzymes from the cluster include the cytochrome P450 monooxygenase tndB, the aldehyde reductase tndE and the alcohol dehydrogenase tndF that are involved in the conversion of talarodiene into talaronoid C. The protein is NAD-dependent epimerase/dehydratase tndE of Aspergillus flavipes.